The chain runs to 381 residues: Cyclic AMP-AMP-GMP synthase (381 aa).

Residues Gln-51, Ser-53, Arg-56, Asp-69, Asp-71, and Arg-109 each contribute to the ATP site. Catalysis depends on residues Asp-69 and Asp-71. The Mg(2+) site is built by Asp-69 and Asp-71. Asp-121 is an active-site residue. Mg(2+) contacts are provided by Asp-121 and Asp-196. 7 residues coordinate ATP: Asp-196, Arg-197, Arg-204, Thr-205, Gln-210, Lys-233, and Tyr-250. Mg(2+)-binding residues include Asn-258 and Leu-260. Residues Val-304 and Arg-307 each coordinate ATP. The tract at residues 348 to 381 (GSKFPLPGPQGGDRNGGFTTPSKPAEPQKTGRFA) is disordered.

It belongs to the CD-NTase family. D02 subfamily. In terms of assembly, monomer. Crystallizes as a Cap2 homodimer bound on each side by a CdnD monomer. Requires Mg(2+) as cofactor. Post-translationally, in bacteria expressing cap4-dncV-cap2-cap3, this protein is conjugated to a number of other proteins by Cap2, probably via this protein's C-terminal Ala residue. More conjugated DncV is found in the absence of Cap3.

It carries out the reaction GTP + 2 ATP = 3',3',3'-cAAG + 3 diphosphate. Primed for activation by Cap2 which conjugates it to cellular proteins; activation is target protein-specific (green fluorescent protein does not activate the enzyme), but which protein(s) activate it is unclear. In terms of biological role, cyclic nucleotide synthase (second messenger synthase) of a CBASS antivirus system. CBASS (cyclic oligonucleotide-based antiphage signaling system) provides immunity against bacteriophages. The CD-NTase protein (CdnD, this protein) synthesizes cyclic nucleotides in response to infection; these serve as specific second messenger signals. The signals activate a diverse range of effectors, leading to bacterial cell death and thus abortive phage infection. A type II-C(AAG) CBASS system. Cyclic trinucleotide synthase that catalyzes the synthesis of 3',3',3'-cyclic AMP-AMP-GMP (cAAG) as the major product, a second messenger for cell signal transduction. Uses ATP as the first donor nucleotide, followed by GTP. Its function is as follows. Protects E.coli against phage T2 infection. When the cdnD-cap2-cap3-cap4 operon is introduced in E.coli there is a more than 10(3) decrease in the efficiency of T2 plaque formation. The operon does not protect against phage T5 and only about 10-fold against T7. Expression of cdnD-cap4 alone protects E.coli against phage T2 infection. This is Cyclic AMP-AMP-GMP synthase from Enterobacter hormaechei subsp. hoffmannii (strain UCI 50).